Consider the following 236-residue polypeptide: tRNA (guanine-N(7)-)-methyltransferase (236 aa).

4 residues coordinate S-adenosyl-L-methionine: aspartate 35, glutamate 60, asparagine 87, and aspartate 113. Aspartate 113 is a catalytic residue. Lysine 117 and aspartate 149 together coordinate substrate. Positions 217-236 are disordered; the sequence is EFEQHWQEIDNPGNAPTPDA.

Belongs to the class I-like SAM-binding methyltransferase superfamily. TrmB family.

It carries out the reaction guanosine(46) in tRNA + S-adenosyl-L-methionine = N(7)-methylguanosine(46) in tRNA + S-adenosyl-L-homocysteine. It participates in tRNA modification; N(7)-methylguanine-tRNA biosynthesis. In terms of biological role, catalyzes the formation of N(7)-methylguanine at position 46 (m7G46) in tRNA. This chain is tRNA (guanine-N(7)-)-methyltransferase, found in Synechococcus sp. (strain CC9902).